Reading from the N-terminus, the 259-residue chain is Uridylate kinase (259 aa).

10 to 13 (KLSG) lines the ATP pocket. Glycine 52 is a UMP binding site. ATP contacts are provided by glycine 53 and arginine 57. UMP-binding positions include aspartate 72 and 134–141 (NGQPFLTT). The ATP site is built by tyrosine 168 and aspartate 171. The interval 236-259 (ISSSPEKSEEFGNEVLASPAESTA) is disordered.

Belongs to the UMP kinase family. As to quaternary structure, homohexamer.

The protein resides in the cytoplasm. It catalyses the reaction UMP + ATP = UDP + ADP. The protein operates within pyrimidine metabolism; CTP biosynthesis via de novo pathway; UDP from UMP (UMPK route): step 1/1. Inhibited by UTP. Functionally, catalyzes the reversible phosphorylation of UMP to UDP. The sequence is that of Uridylate kinase from Frankia casuarinae (strain DSM 45818 / CECT 9043 / HFP020203 / CcI3).